The sequence spans 141 residues: Large ribosomal subunit protein uL16 (141 aa).

Residues 1-17 (MLMPKRTKFRKQMKGRN) show a composition bias toward basic residues. Residues 1–22 (MLMPKRTKFRKQMKGRNRGYAT) form a disordered region.

Belongs to the universal ribosomal protein uL16 family. In terms of assembly, part of the 50S ribosomal subunit.

Its function is as follows. Binds 23S rRNA and is also seen to make contacts with the A and possibly P site tRNAs. This Campylobacter curvus (strain 525.92) protein is Large ribosomal subunit protein uL16.